The sequence spans 101 residues: NADH-quinone oxidoreductase subunit K (101 aa).

3 helical membrane-spanning segments follow: residues 2–22 (TLSA…YGAL), 28–48 (VIVL…FVAF), and 62–82 (FALF…AALI).

Belongs to the complex I subunit 4L family. In terms of assembly, NDH-1 is composed of 14 different subunits. Subunits NuoA, H, J, K, L, M, N constitute the membrane sector of the complex.

Its subcellular location is the cell membrane. It carries out the reaction a quinone + NADH + 5 H(+)(in) = a quinol + NAD(+) + 4 H(+)(out). NDH-1 shuttles electrons from NADH, via FMN and iron-sulfur (Fe-S) centers, to quinones in the respiratory chain. The immediate electron acceptor for the enzyme in this species is believed to be a menaquinone. Couples the redox reaction to proton translocation (for every two electrons transferred, four hydrogen ions are translocated across the cytoplasmic membrane), and thus conserves the redox energy in a proton gradient. This Geobacillus kaustophilus (strain HTA426) protein is NADH-quinone oxidoreductase subunit K.